Consider the following 484-residue polypeptide: Glutamate--tRNA ligase (484 aa).

The 'HIGH' region motif lies at 11–21; sequence PSPTGYLHIGN. The short motif at 252 to 256 is the 'KMSKS' region element; the sequence is KLSKR. Residue K255 coordinates ATP.

This sequence belongs to the class-I aminoacyl-tRNA synthetase family. Glutamate--tRNA ligase type 1 subfamily. In terms of assembly, monomer.

Its subcellular location is the cytoplasm. The enzyme catalyses tRNA(Glu) + L-glutamate + ATP = L-glutamyl-tRNA(Glu) + AMP + diphosphate. Functionally, catalyzes the attachment of glutamate to tRNA(Glu) in a two-step reaction: glutamate is first activated by ATP to form Glu-AMP and then transferred to the acceptor end of tRNA(Glu). This Staphylococcus haemolyticus (strain JCSC1435) protein is Glutamate--tRNA ligase.